Reading from the N-terminus, the 417-residue chain is Serine--tRNA ligase (417 aa).

Position 224-226 (224-226) interacts with L-serine; that stretch reads TSE. ATP is bound by residues 255-257 and valine 271; that span reads RRE. Position 278 (glutamate 278) interacts with L-serine. 342–345 is an ATP binding site; the sequence is ELTS. Threonine 377 is an L-serine binding site.

It belongs to the class-II aminoacyl-tRNA synthetase family. Type-1 seryl-tRNA synthetase subfamily. In terms of assembly, homodimer. The tRNA molecule binds across the dimer.

The protein resides in the cytoplasm. It carries out the reaction tRNA(Ser) + L-serine + ATP = L-seryl-tRNA(Ser) + AMP + diphosphate + H(+). The enzyme catalyses tRNA(Sec) + L-serine + ATP = L-seryl-tRNA(Sec) + AMP + diphosphate + H(+). It functions in the pathway aminoacyl-tRNA biosynthesis; selenocysteinyl-tRNA(Sec) biosynthesis; L-seryl-tRNA(Sec) from L-serine and tRNA(Sec): step 1/1. Functionally, catalyzes the attachment of serine to tRNA(Ser). Is also able to aminoacylate tRNA(Sec) with serine, to form the misacylated tRNA L-seryl-tRNA(Sec), which will be further converted into selenocysteinyl-tRNA(Sec). In Mycobacterium leprae (strain TN), this protein is Serine--tRNA ligase.